Reading from the N-terminus, the 197-residue chain is Transmembrane 4 L6 family member 5 (197 aa).

The Cytoplasmic portion of the chain corresponds to 1–9; the sequence is MCTGKCARC. A helical membrane pass occupies residues 10-30; the sequence is VGLSLITLCLVCIVANALLLV. Residues 31-46 are Extracellular-facing; sequence PNGETSWTNTNHLSLQ. A helical membrane pass occupies residues 47-67; the sequence is VWLMGGFIGGGLMVLCPGIAA. The Cytoplasmic portion of the chain corresponds to 68 to 90; it reads VRAGGKGCCGAGCCGNRCRMLRS. A helical membrane pass occupies residues 91–111; it reads VFSSAFGVLGAIYCLSVSGAG. Residues 91–197 are interaction with MTOR and CASTOR1; sequence VFSSAFGVLG…DCRKKQDTPH (107 aa). Residues 112 to 157 are Extracellular-facing; that stretch reads LRNGPRCLMNGEWGYHFEDTAGAYLLNRTLWDRCEAPPRVVPWNVT. 124–129 lines the L-arginine pocket; that stretch reads WGYHFE. N-linked (GlcNAc...) asparagine glycans are attached at residues N138 and N155. A helical membrane pass occupies residues 158 to 178; the sequence is LFSLLVAASCLEIVLCGIQLV. Residues 179–197 are Cytoplasmic-facing; that stretch reads NATIGVFCGDCRKKQDTPH.

This sequence belongs to the L6 tetraspanin family. Interacts with MTOR; the interaction is positively regulated by arginine and is negatively regulated by leucine. Interacts with SLC38A9. Interacts with SLC7A1; the interaction is negatively regulated by arginine. Interacts with CASTOR1; the interaction is positively regulated by leucine and is negatively regulated by arginine. In terms of tissue distribution, intestine. Overexpressed in pancreatic cancers.

Its subcellular location is the lysosome membrane. The protein localises to the cell membrane. Its function is as follows. Acts as a lysosomal membrane arginine sensor. Forms a complex with MTOR and SLC38A9 on lysosomal membranes in an arginine-regulated manner, leading to arginine efflux which enables the activation of mTORC1 which subsequently leads to RPS6KB1 and EIF4EBP1 phosphorylations. Facilitates cell cycle G1/S phase progression and the translocation of the CDK4-CCND1 complex into the nucleus. CDKN1B and RHOA/ROCK signaling activity are involved in TM4SF5-mediated acceleration of G1/S phase progression. This is Transmembrane 4 L6 family member 5 (TM4SF5) from Homo sapiens (Human).